Reading from the N-terminus, the 972-residue chain is MSGDVAAENSIHIQNGGSCEVVQSNGVTTNGHGHHHHHHSSSSSSSKHKSSSKDKHRDREREHKSSNSSSSSKEHKSSSRDKDRHKSSSSSSKHRDKDKERDGSSNSHRSGSSSSHKDKDGSSSSKHKSSSGHHKRSSKDKERRDKDKDRGSSSSSRHKSSSSSRDKERSSSSHKSSSSSSSSKSKHSSSRHSSSSSSKDHPSYDGVFVKPEPVSQQLMHSGSVDAFQMQQLGSYEAAAAGTNFNGNGNVAGANYKNGYEESIVDIKKEEESFNNLSQASSCDYSMSQFRADEPPFVVKHEQSYAEEDSTMNYNDHDDDADEMNDDEEDVPLAMRKRKQEATDRPDGGMDNDDDDDIPLLARKKVKKEKIKKESKEKSKKRVKEEPSDDYGNVKPKKKKMKKEPEPAVSPGKRQKAKAKVEEEEVWRWWEEEKRADGVKWSTLEHKGPVFAPRYERVPRNVRFYYDGKPLELSEETEEAATFYAKMLNHDYCTKEVFNNNFFKDFRKSMTPREREIIKDFRKCNFQEMFNYFQAESEKRKAASKEEKLIKKNENEALMKEFGFCMIDGHKEKIGNFRLEPPGLFRGRGEHPKMGMIKRRIQASDVSINCGKDSKVPSPPPGSRWKEVRHDNTVTWLASWIENVQGQVKYIMLNPSSKLKGEKDHIKYETARRLDKVIDKIRATYRDEWKSKEMRVRQRAVALYFIDKLALRAGNEKDEDQADTVGCCSLRVEHVQLHKELNGKENVVVFDFPGKDSIRYYNEVEVEKRVFKNLELFMEHKKEGDDLFDRLNTQVLNEHLKELMEGLTAKVFRTYNASKTLQSQLDLLTDPSATVPEKLLAYNRANRAVAILCNHQRSVPKSHEKSMENLKEKIKAKREAIEKCESEYHSRDEKKGKQLERLRDQLKKLELQETDRDENKTIALGTSKLNYLDPRISVAWCKKHDVPIEKIFNKTQRTKFLWAVHMADENYRF.

Disordered regions lie at residues Met-1–Lys-210 and His-300–Ala-416. Residues Ile-11–Gly-31 are compositionally biased toward polar residues. The segment covering His-32 to Ser-50 has biased composition (basic residues). Composition is skewed to basic and acidic residues over residues Ser-51 to Ser-65, Ser-72 to Lys-86, and Lys-93 to Gly-103. The segment covering Ser-104 to Ser-114 has biased composition (low complexity). Over residues Ser-125 to Ser-138 the composition is skewed to basic residues. Residues Lys-139 to Gly-151 are compositionally biased toward basic and acidic residues. The segment covering Ser-173–Ser-183 has biased composition (low complexity). The residue at position 303 (Ser-303) is a Phosphoserine. Tyr-304 carries the phosphotyrosine modification. Residues His-316–Val-330 show a composition bias toward acidic residues. 3 interaction with DNA regions span residues Lys-648–Tyr-649, Arg-711–Lys-716, and Thr-807–Lys-809. The 318-residue stretch at Ser-655–Phe-972 folds into the Topo IB-type catalytic domain. The active-site O-(3'-phospho-DNA)-tyrosine intermediate is Tyr-930.

It belongs to the type IB topoisomerase family. As to quaternary structure, interacts with Topors.

The protein localises to the nucleus. The protein resides in the cytoplasm. It catalyses the reaction ATP-independent breakage of single-stranded DNA, followed by passage and rejoining.. Its function is as follows. Releases the supercoiling and torsional tension of DNA introduced during the DNA replication and transcription by transiently cleaving and rejoining one strand of the DNA duplex. Introduces a single-strand break via transesterification at a target site in duplex DNA. The scissile phosphodiester is attacked by the catalytic tyrosine of the enzyme, resulting in the formation of a DNA-(3'-phosphotyrosyl)-enzyme intermediate and the expulsion of a 5'-OH DNA strand. The free DNA strand then undergoes passage around the unbroken strand thus removing DNA supercoils. Finally, in the religation step, the DNA 5'-OH attacks the covalent intermediate to expel the active-site tyrosine and restore the DNA phosphodiester backbone. This is DNA topoisomerase 1 from Drosophila melanogaster (Fruit fly).